A 502-amino-acid chain; its full sequence is ATP synthase subunit alpha (502 aa).

ATP is bound at residue 169-176 (GDRQTGKT).

This sequence belongs to the ATPase alpha/beta chains family. As to quaternary structure, F-type ATPases have 2 components, CF(1) - the catalytic core - and CF(0) - the membrane proton channel. CF(1) has five subunits: alpha(3), beta(3), gamma(1), delta(1), epsilon(1). CF(0) has three main subunits: a(1), b(2) and c(9-12). The alpha and beta chains form an alternating ring which encloses part of the gamma chain. CF(1) is attached to CF(0) by a central stalk formed by the gamma and epsilon chains, while a peripheral stalk is formed by the delta and b chains. The F(1)F(0) complex interacts with SpoIIIJ and YqjG; YqgA is found in the same complex.

It localises to the cell membrane. Its subcellular location is the membrane raft. The catalysed reaction is ATP + H2O + 4 H(+)(in) = ADP + phosphate + 5 H(+)(out). In terms of biological role, produces ATP from ADP in the presence of a proton gradient across the membrane. The alpha chain is a regulatory subunit. The sequence is that of ATP synthase subunit alpha from Bacillus subtilis (strain 168).